We begin with the raw amino-acid sequence, 425 residues long: Probable threonylcarbamoyladenosine tRNA methylthiotransferase (425 aa).

The 109-residue stretch at 2-110 (VKVYIENYGC…IVQAVEYAMR (109 aa)) folds into the MTTase N-terminal domain. Residues cysteine 11, cysteine 47, cysteine 76, cysteine 148, cysteine 152, and cysteine 155 each contribute to the [4Fe-4S] cluster site. The region spanning 134–363 (SPRNVYFILP…HRIRLQISYE (230 aa)) is the Radical SAM core domain. The 60-residue stretch at 366–425 (RKYIGKKVKVLIHGEGKKGNVDAVTMNYKHIILPEGRKGEFREARVKNAASTYLLGEIIT) folds into the TRAM domain.

This sequence belongs to the methylthiotransferase family. CDKAL1 subfamily. [4Fe-4S] cluster is required as a cofactor.

The enzyme catalyses N(6)-L-threonylcarbamoyladenosine(37) in tRNA + (sulfur carrier)-SH + AH2 + 2 S-adenosyl-L-methionine = 2-methylsulfanyl-N(6)-L-threonylcarbamoyladenosine(37) in tRNA + (sulfur carrier)-H + 5'-deoxyadenosine + L-methionine + A + S-adenosyl-L-homocysteine + 2 H(+). Its function is as follows. Catalyzes the methylthiolation of N6-threonylcarbamoyladenosine (t(6)A), leading to the formation of 2-methylthio-N6-threonylcarbamoyladenosine (ms(2)t(6)A) at position 37 in tRNAs that read codons beginning with adenine. The sequence is that of Probable threonylcarbamoyladenosine tRNA methylthiotransferase from Pyrococcus horikoshii (strain ATCC 700860 / DSM 12428 / JCM 9974 / NBRC 100139 / OT-3).